A 121-amino-acid polypeptide reads, in one-letter code: Cysteine-rich neurotrophic factor (121 aa).

A signal peptide spans 1–18 (MLLKLIVALSLTLTLASA). Residue Asn57 is glycosylated (N-linked (GlcNAc...) asparagine).

It is found in the secreted. Interacts with the p75 low-affinity neurotrophin receptor. Evokes neurite outgrowth and modulated calcium currents in pedal motor neurons. May be involved in target-derived trophic support for motor neurons. This chain is Cysteine-rich neurotrophic factor, found in Lymnaea stagnalis (Great pond snail).